The primary structure comprises 650 residues: Chaperone protein DnaK (650 aa).

A Phosphothreonine; by autocatalysis modification is found at threonine 200. The disordered stretch occupies residues 614 to 634 (AGAAGAAGAAEGAAHAGGAQQ).

This sequence belongs to the heat shock protein 70 family.

Its function is as follows. Acts as a chaperone. The polypeptide is Chaperone protein DnaK (Burkholderia cenocepacia (strain ATCC BAA-245 / DSM 16553 / LMG 16656 / NCTC 13227 / J2315 / CF5610) (Burkholderia cepacia (strain J2315))).